A 481-amino-acid chain; its full sequence is MELRNKKLTHDEFMTERQQVLKTWETGKDVENFEDGVKYQQTIPEHKRFSLALLKADKEGKTLSQPRAGVALMDEHIELLKTLQEECDLLPSTIDAYTRLNRYEEAAVGIKKSIEAGTSKLNGLPVVNHGVAACRRLTETLQKPLQIRHGTPDARLLAEISMASGFTSYEGGGISYNIPYAKRVTLEKSIRDWQYCDRLMGMYEEHGIRINREPFGPLTGTLIPPFISHSIAIIEGLLALEQGVKSITVGYGQVGSLTQDVAAIQSLRELAHEYFQSYGYTDYELSTVFHQWMGGFPEDESKAFAIISWGAAVAGMSGATKVITKSPHEAWGIPTAAANIQGLKASRQMLNMVNEQKFPPCPAVELEIELIKSEVRAVLNKVFELGNGDIARGTVLAFEAGVLDVPFAPAACNAGKILPVRDNTGAIRVLEAGAVPLPKDILDLHHDYVAERARCEGRQPTFQMVVDDINAVSHSKLIGRP.

Arg-67 serves as a coordination point for L-glutamate. Gly-69 contacts adenosylcob(III)alamin. Arg-99 is an L-glutamate binding site. Asn-122 provides a ligand contact to adenosylcob(III)alamin. L-glutamate is bound by residues 148-149 (RH), Glu-170, and Tyr-176. Pro-179 is an adenosylcob(III)alamin binding site. Tyr-180 provides a ligand contact to L-glutamate. Phe-296, Lys-325, Glu-329, and Ile-333 together coordinate adenosylcob(III)alamin.

The protein belongs to the methylaspartate mutase GlmE subunit family. In terms of assembly, heterotetramer composed of 2 epsilon subunits (GlmE) and 2 sigma subunits (GlmS). GlmE exists as a homodimer and GlmS as a monomer. It depends on adenosylcob(III)alamin as a cofactor.

The catalysed reaction is (2S,3S)-3-methyl-L-aspartate = L-glutamate. The protein operates within amino-acid degradation; L-glutamate degradation via mesaconate pathway; acetate and pyruvate from L-glutamate: step 1/4. Functionally, catalyzes the carbon skeleton rearrangement of L-glutamate to L-threo-3-methylaspartate ((2S,3S)-3-methylaspartate). In Escherichia coli O157:H7, this protein is Glutamate mutase epsilon subunit.